The primary structure comprises 336 residues: Fructose-1,6-bisphosphatase class 1 (336 aa).

Residues Glu90, Asp112, Leu114, and Asp115 each contribute to the Mg(2+) site. Substrate contacts are provided by residues 115–118 (DGSS), Asn211, and Lys277. Mg(2+) is bound at residue Glu283.

It belongs to the FBPase class 1 family. Homotetramer. Requires Mg(2+) as cofactor.

It is found in the cytoplasm. It carries out the reaction beta-D-fructose 1,6-bisphosphate + H2O = beta-D-fructose 6-phosphate + phosphate. Its pathway is carbohydrate biosynthesis; gluconeogenesis. The sequence is that of Fructose-1,6-bisphosphatase class 1 from Stutzerimonas stutzeri (strain A1501) (Pseudomonas stutzeri).